Consider the following 277-residue polypeptide: Carbonyl reductase [NADPH] 1 (277 aa).

Ser2 is subject to N-acetylserine. Phosphoserine is present on Ser2. NADP(+)-binding positions include 10 to 34 (VTGA…GDVV), 63 to 64 (DI), and Asn90. Residues 95–97 (FKV) and Gln106 each bind glutathione. Ser140 contacts substrate. Residue 193–194 (AY) participates in glutathione binding. The active-site Proton acceptor is Tyr194. NADP(+) contacts are provided by residues 194 to 198 (YGVTK) and 231 to 233 (VRT). Lys239 is subject to N6-1-carboxyethyl lysine. The segment at 258-277 (PPGAEGPHGQFVQDKKVEPW) is disordered.

Belongs to the short-chain dehydrogenases/reductases (SDR) family. As to quaternary structure, monomer.

The protein resides in the cytoplasm. The catalysed reaction is a secondary alcohol + NADP(+) = a ketone + NADPH + H(+). It carries out the reaction prostaglandin F2alpha + NADP(+) = prostaglandin E2 + NADPH + H(+). It catalyses the reaction prostaglandin E1 + NADP(+) = 15-oxoprostaglandin E1 + NADPH + H(+). The enzyme catalyses menadione + NADPH + H(+) = menadiol + NADP(+). The catalysed reaction is prostaglandin D2 + NADP(+) = 15-oxoprostaglandin D2 + NADPH + H(+). It carries out the reaction prostaglandin E2 + NADP(+) = 15-oxoprostaglandin E2 + NADPH + H(+). It catalyses the reaction prostaglandin F2alpha + NADP(+) = 15-oxoprostaglandin F2alpha + NADPH + H(+). The enzyme catalyses daunorubicin + NADPH + H(+) = 13-dihydrodaunorubicin + NADP(+). The catalysed reaction is S-nitrosoglutathione + NADPH + H(+) = S-(hydroxysulfenamide)glutathione + NADP(+). It carries out the reaction a primary alcohol + NADP(+) = an aldehyde + NADPH + H(+). It catalyses the reaction cortisol + NADPH + H(+) = 20beta-dihydrocortisol + NADP(+). The enzyme catalyses corticosterone + NADPH + H(+) = 20beta-dihydrocorticosterone + NADP(+). NADPH-dependent reductase with broad substrate specificity. Catalyzes the reduction of a wide variety of carbonyl compounds including quinones, prostaglandins, menadione, plus various xenobiotics. Catalyzes the reduction of the antitumor anthracyclines doxorubicin and daunorubicin to the cardiotoxic compounds doxorubicinol and daunorubicinol. Can convert prostaglandin E to prostaglandin F2-alpha. Can bind glutathione, which explains its higher affinity for glutathione-conjugated substrates. Catalyzes the reduction of S-nitrosoglutathione. In addition, participates in the glucocorticoid metabolism by catalyzing the NADPH-dependent cortisol/corticosterone into 20beta-dihydrocortisol (20b-DHF) or 20beta-corticosterone (20b-DHB), which are weak agonists of NR3C1 and NR3C2 in adipose tissue. The sequence is that of Carbonyl reductase [NADPH] 1 from Rattus norvegicus (Rat).